Here is a 206-residue protein sequence, read N- to C-terminus: Uridine kinase (206 aa).

11-18 (GGTGSGKS) serves as a coordination point for ATP.

Belongs to the uridine kinase family.

The protein resides in the cytoplasm. It carries out the reaction uridine + ATP = UMP + ADP + H(+). It catalyses the reaction cytidine + ATP = CMP + ADP + H(+). It functions in the pathway pyrimidine metabolism; CTP biosynthesis via salvage pathway; CTP from cytidine: step 1/3. The protein operates within pyrimidine metabolism; UMP biosynthesis via salvage pathway; UMP from uridine: step 1/1. This is Uridine kinase from Clostridium botulinum (strain Kyoto / Type A2).